The sequence spans 484 residues: Bifunctional protein GlmU (484 aa).

Residues methionine 1 to arginine 240 form a pyrophosphorylase region. Residues leucine 12–glycine 15, lysine 26, glutamine 79, and glycine 84–threonine 85 each bind UDP-N-acetyl-alpha-D-glucosamine. Residue aspartate 113 participates in Mg(2+) binding. Residues glycine 150, glutamate 165, asparagine 180, and asparagine 238 each coordinate UDP-N-acetyl-alpha-D-glucosamine. Asparagine 238 contacts Mg(2+). Positions valine 241–aspartate 261 are linker. The interval glycine 262–arginine 484 is N-acetyltransferase. Residues arginine 343 and lysine 361 each contribute to the UDP-N-acetyl-alpha-D-glucosamine site. Catalysis depends on histidine 373, which acts as the Proton acceptor. Residues tyrosine 376 and asparagine 387 each contribute to the UDP-N-acetyl-alpha-D-glucosamine site. Residues alanine 390, asparagine 396–tyrosine 397, serine 415, and alanine 433 each bind acetyl-CoA. Residues glutamate 457–arginine 484 form a disordered region. Positions glutamate 474 to arginine 484 are enriched in basic and acidic residues.

The protein in the N-terminal section; belongs to the N-acetylglucosamine-1-phosphate uridyltransferase family. This sequence in the C-terminal section; belongs to the transferase hexapeptide repeat family. Homotrimer. Mg(2+) serves as cofactor.

It localises to the cytoplasm. It carries out the reaction alpha-D-glucosamine 1-phosphate + acetyl-CoA = N-acetyl-alpha-D-glucosamine 1-phosphate + CoA + H(+). The enzyme catalyses N-acetyl-alpha-D-glucosamine 1-phosphate + UTP + H(+) = UDP-N-acetyl-alpha-D-glucosamine + diphosphate. Its pathway is nucleotide-sugar biosynthesis; UDP-N-acetyl-alpha-D-glucosamine biosynthesis; N-acetyl-alpha-D-glucosamine 1-phosphate from alpha-D-glucosamine 6-phosphate (route II): step 2/2. It participates in nucleotide-sugar biosynthesis; UDP-N-acetyl-alpha-D-glucosamine biosynthesis; UDP-N-acetyl-alpha-D-glucosamine from N-acetyl-alpha-D-glucosamine 1-phosphate: step 1/1. The protein operates within bacterial outer membrane biogenesis; LPS lipid A biosynthesis. Its function is as follows. Catalyzes the last two sequential reactions in the de novo biosynthetic pathway for UDP-N-acetylglucosamine (UDP-GlcNAc). The C-terminal domain catalyzes the transfer of acetyl group from acetyl coenzyme A to glucosamine-1-phosphate (GlcN-1-P) to produce N-acetylglucosamine-1-phosphate (GlcNAc-1-P), which is converted into UDP-GlcNAc by the transfer of uridine 5-monophosphate (from uridine 5-triphosphate), a reaction catalyzed by the N-terminal domain. In Thermobifida fusca (strain YX), this protein is Bifunctional protein GlmU.